The primary structure comprises 156 residues: Cyanate hydratase (156 aa).

Residues arginine 96, glutamate 99, and serine 122 contribute to the active site.

The protein belongs to the cyanase family.

The enzyme catalyses cyanate + hydrogencarbonate + 3 H(+) = NH4(+) + 2 CO2. Functionally, catalyzes the reaction of cyanate with bicarbonate to produce ammonia and carbon dioxide. The protein is Cyanate hydratase of Escherichia coli O7:K1 (strain IAI39 / ExPEC).